The sequence spans 495 residues: Prenylcysteine oxidase 1-like (495 aa).

The first 22 residues, 1-22 (MARAAPLLAVLATVLTTAAAGG), serve as a signal peptide directing secretion. Asparagine 185 and asparagine 343 each carry an N-linked (GlcNAc...) asparagine glycan.

This sequence belongs to the prenylcysteine oxidase family. The cofactor is FAD.

The protein resides in the secreted. Likely to have oxidoreductase activity. Required in the mevalonate pathway to regulate prenylation and enhances the bactericidal activity of neutrophils. The polypeptide is Prenylcysteine oxidase 1-like (Pcyox1l) (Mus musculus (Mouse)).